Here is a 90-residue protein sequence, read N- to C-terminus: Large ribosomal subunit protein bL27 (90 aa).

The tract at residues M1–G22 is disordered.

The protein belongs to the bacterial ribosomal protein bL27 family.

This is Large ribosomal subunit protein bL27 from Coxiella burnetii (strain Dugway 5J108-111).